Consider the following 482-residue polypeptide: tRNA sulfurtransferase (482 aa).

A THUMP domain is found at 61 to 165 (LAIRDALTRI…DDRLLLIKGR (105 aa)). Residues 183 to 184 (LI), K265, G287, and Q296 each bind ATP. Residues C344 and C456 are joined by a disulfide bond. In terms of domain architecture, Rhodanese spans 404–482 (FGPNDVILDI…GFNNVKVYRP (79 aa)). The Cysteine persulfide intermediate role is filled by C456.

Belongs to the ThiI family.

It is found in the cytoplasm. It carries out the reaction [ThiI sulfur-carrier protein]-S-sulfanyl-L-cysteine + a uridine in tRNA + 2 reduced [2Fe-2S]-[ferredoxin] + ATP + H(+) = [ThiI sulfur-carrier protein]-L-cysteine + a 4-thiouridine in tRNA + 2 oxidized [2Fe-2S]-[ferredoxin] + AMP + diphosphate. The catalysed reaction is [ThiS sulfur-carrier protein]-C-terminal Gly-Gly-AMP + S-sulfanyl-L-cysteinyl-[cysteine desulfurase] + AH2 = [ThiS sulfur-carrier protein]-C-terminal-Gly-aminoethanethioate + L-cysteinyl-[cysteine desulfurase] + A + AMP + 2 H(+). It functions in the pathway cofactor biosynthesis; thiamine diphosphate biosynthesis. Functionally, catalyzes the ATP-dependent transfer of a sulfur to tRNA to produce 4-thiouridine in position 8 of tRNAs, which functions as a near-UV photosensor. Also catalyzes the transfer of sulfur to the sulfur carrier protein ThiS, forming ThiS-thiocarboxylate. This is a step in the synthesis of thiazole, in the thiamine biosynthesis pathway. The sulfur is donated as persulfide by IscS. This Escherichia coli (strain 55989 / EAEC) protein is tRNA sulfurtransferase.